The primary structure comprises 473 residues: Photosystem II CP43 reaction center protein (473 aa).

The propeptide occupies 1-14 (MKTLYSLRRFYPVE). T15 is modified (N-acetylthreonine). T15 is subject to Phosphothreonine. 5 consecutive transmembrane segments (helical) span residues 69–93 (LFEV…PHLA), 134–155 (LLGP…KDRN), 178–200 (KALY…RKIT), 255–275 (KPFA…LSYS), and 291–312 (WFNN…ASQA). Residue E367 participates in [CaMn4O5] cluster binding. Positions 426–473 (LSTSHFVLGFFLFVGHLWHAGRARAAAAGFEKGIDRDFEPVLSMTPLN) are excised as a propeptide. The chain crosses the membrane as a helical span at residues 447–471 (RARAAAAGFEKGIDRDFEPVLSMTP).

It belongs to the PsbB/PsbC family. PsbC subfamily. As to quaternary structure, PSII is composed of 1 copy each of membrane proteins PsbA, PsbB, PsbC, PsbD, PsbE, PsbF, PsbH, PsbI, PsbJ, PsbK, PsbL, PsbM, PsbT, PsbX, PsbY, PsbZ, Psb30/Ycf12, at least 3 peripheral proteins of the oxygen-evolving complex and a large number of cofactors. It forms dimeric complexes. The cofactor is Binds multiple chlorophylls and provides some of the ligands for the Ca-4Mn-5O cluster of the oxygen-evolving complex. It may also provide a ligand for a Cl- that is required for oxygen evolution. PSII binds additional chlorophylls, carotenoids and specific lipids.. Over time a tryptophan in the fifth lumenal loop is converted to 2-hydroxy-2,3-dihydrotryptophan, 2-oxo-2,3-dihydrotryptophan, and kynurenine by oxidizing species from the active site. This oxidation targets the protein for turnover.

The protein resides in the plastid. It is found in the chloroplast thylakoid membrane. Functionally, one of the components of the core complex of photosystem II (PSII). It binds chlorophyll and helps catalyze the primary light-induced photochemical processes of PSII. PSII is a light-driven water:plastoquinone oxidoreductase, using light energy to abstract electrons from H(2)O, generating O(2) and a proton gradient subsequently used for ATP formation. This Spinacia oleracea (Spinach) protein is Photosystem II CP43 reaction center protein.